The chain runs to 569 residues: MTVENVEEKLSINEHLKTDSDFLRGGIEEGLDTAVTGAFSEGDQQLIKFHGFYQQDDRDLRNERKEQKLEPLYSFMLRARVAGGVCTPEQWLGVDEISSTLTSSNSIRLTTRQTFQYHGISKRNLRTLIQSLDKKALDSIAACGDVNRNVMCNPNPVESRLHEQAYYWAKKLSDIYLPRTKAYAEIWLGDDKVATSEGDEVEPIYGKTYLPRKFKMAVAVPPDNDVDVYTNDLGLIAVAQEGELVGFNLVAGGGMGSTHGEVETFPRLADDFGFIKAEDTLKFAEAILKVQRDWGNRSNRKQSRLKYTIVKHGYDAFKAEVEKRAGVTFEPKRDVVIGDRGDRYGWIKGVDNRWHLTLFIEGGRIKDLPGQPLQTGLREIAKIHKGDFRMTSNQNFIVAGVAEEDKEAIEALARNHGLMGKLITETRGRSIACVALPTCALAMAEAERYFPDFLTKVESLQEKHGFADQGIVIRMTGCPNGCARPFAAEIGLVGKAPGRYNLYLGASFEGTRLNKLYRENIQEAEILSELDQLFARYVSEREEGETFGNFTVRSGVVKAVIDAAKDFHD.

[4Fe-4S] cluster-binding residues include Cys433, Cys439, Cys478, and Cys482. Residue Cys482 participates in siroheme binding.

Belongs to the nitrite and sulfite reductase 4Fe-4S domain family. In terms of assembly, alpha(8)-beta(8). The alpha component is a flavoprotein, the beta component is a hemoprotein. Siroheme serves as cofactor. It depends on [4Fe-4S] cluster as a cofactor.

The enzyme catalyses hydrogen sulfide + 3 NADP(+) + 3 H2O = sulfite + 3 NADPH + 4 H(+). It functions in the pathway sulfur metabolism; hydrogen sulfide biosynthesis; hydrogen sulfide from sulfite (NADPH route): step 1/1. Component of the sulfite reductase complex that catalyzes the 6-electron reduction of sulfite to sulfide. This is one of several activities required for the biosynthesis of L-cysteine from sulfate. This Shewanella sediminis (strain HAW-EB3) protein is Sulfite reductase [NADPH] hemoprotein beta-component.